We begin with the raw amino-acid sequence, 229 residues long: Large ribosomal subunit protein bL25 (229 aa).

Disordered regions lie at residues 1 to 21 (MDII…ASSR) and 182 to 229 (NAPE…KDKK). Over residues 195-222 (PAAGAPAAGAAAAPAAGAAAPAKGAAPA) the composition is skewed to low complexity.

It belongs to the bacterial ribosomal protein bL25 family. CTC subfamily. Part of the 50S ribosomal subunit; part of the 5S rRNA/L5/L18/L25 subcomplex. Contacts the 5S rRNA. Binds to the 5S rRNA independently of L5 and L18.

This is one of the proteins that binds to the 5S RNA in the ribosome where it forms part of the central protuberance. The polypeptide is Large ribosomal subunit protein bL25 (Sorangium cellulosum (strain So ce56) (Polyangium cellulosum (strain So ce56))).